The sequence spans 239 residues: Ribonuclease 3 (239 aa).

The RNase III domain maps to 18 to 141; that stretch reads YTTLEKALGY…LMAGVYLEAG (124 aa). Residue E54 participates in Mg(2+) binding. D58 is a catalytic residue. Residues S127 and E130 each coordinate Mg(2+). Residue E130 is part of the active site. A DRBM domain is found at 168 to 237; it reads DYKTALQELT…AYQALQKLKE (70 aa).

Belongs to the ribonuclease III family. Homodimer. Mg(2+) is required as a cofactor.

It is found in the cytoplasm. The enzyme catalyses Endonucleolytic cleavage to 5'-phosphomonoester.. Its function is as follows. Digests double-stranded RNA. Involved in the processing of primary rRNA transcript to yield the immediate precursors to the large and small rRNAs (23S and 16S). Processes some mRNAs, and tRNAs when they are encoded in the rRNA operon. Processes pre-crRNA and tracrRNA of type II CRISPR loci if present in the organism. This is Ribonuclease 3 from Helicobacter pylori (strain ATCC 700392 / 26695) (Campylobacter pylori).